Consider the following 245-residue polypeptide: Carboxymethylenebutenolidase homolog (245 aa).

Alanine 2 carries the post-translational modification N-acetylalanine. At lysine 36 the chain carries N6-acetyllysine. Catalysis depends on residues cysteine 132, aspartate 179, and histidine 212. Serine 223 is subject to Phosphoserine.

It belongs to the dienelactone hydrolase family. As to expression, widely expressed, with highest levels in liver, followed by kidney, small intestine and colon. Present in liver and intestine (at protein level).

The protein resides in the cytoplasm. It localises to the cytosol. Its activity is regulated as follows. Strongly inhibited by p-chloromercuribenzoate (PCMB). Partially inhibited by bis-p-nitrophenylphosphate (BNPP). Not inhibited by DFP, PMSF, eserine or EDTA. Cysteine hydrolase. Can convert the prodrug olmesartan medoxomil into its pharmacologically active metabolite olmerstatan, an angiotensin receptor blocker, in liver and intestine. May also activate beta-lactam antibiotics faropenem medoxomil and lenampicillin. The sequence is that of Carboxymethylenebutenolidase homolog (CMBL) from Homo sapiens (Human).